Reading from the N-terminus, the 216-residue chain is Thymidine kinase (216 aa).

ATP contacts are provided by residues 9 to 16 (GPMDSGKS) and 86 to 89 (DEAQ). Glutamate 87 (proton acceptor) is an active-site residue.

It belongs to the thymidine kinase family. As to quaternary structure, homotetramer.

It is found in the cytoplasm. The catalysed reaction is thymidine + ATP = dTMP + ADP + H(+). This is Thymidine kinase from Cutibacterium acnes (strain DSM 16379 / KPA171202) (Propionibacterium acnes).